The chain runs to 269 residues: Integral membrane protein 2C (269 aa).

Thr39 bears the Phosphothreonine mark. A helical; Signal-anchor for type II membrane protein transmembrane segment spans residues 57–77 (VGGVCYLSMGMVVLLMGLVFA). In terms of domain architecture, BRICHOS spans 138-232 (FGGGDPADII…LCNGKDTYRL (95 aa)). Cysteines 165 and 224 form a disulfide. N-linked (GlcNAc...) asparagine glycosylation occurs at Asn171.

It belongs to the ITM2 family. Interacts with BACE1. Interacts with APP. Interacts with STMN2. In terms of processing, type I membrane-bound, as well as soluble, furin has a pre-eminent role in ITM2C proteolytic processing. PCSK7 and PCSK5 may also be involved although to a lesser extent. The soluble form of PCSK7 is incapable of processing ITM2C. Fails to undergo shedding by ADAM10 and intramembrane cleavage by SPPL2B.

Its subcellular location is the lysosome membrane. It is found in the cell membrane. Negative regulator of amyloid-beta peptide production. May inhibit the processing of APP by blocking its access to alpha- and beta-secretase. Binding to the beta-secretase-cleaved APP C-terminal fragment is negligible, suggesting that ITM2C is a poor gamma-secretase cleavage inhibitor. May play a role in TNF-induced cell death and neuronal differentiation. The polypeptide is Integral membrane protein 2C (ITM2C) (Sus scrofa (Pig)).